The following is a 496-amino-acid chain: Guanosine-5'-triphosphate,3'-diphosphate pyrophosphatase (496 aa).

The protein belongs to the GppA/Ppx family. GppA subfamily.

The catalysed reaction is guanosine 3'-diphosphate 5'-triphosphate + H2O = guanosine 3',5'-bis(diphosphate) + phosphate + H(+). It participates in purine metabolism; ppGpp biosynthesis; ppGpp from GTP: step 2/2. Catalyzes the conversion of pppGpp to ppGpp. Guanosine pentaphosphate (pppGpp) is a cytoplasmic signaling molecule which together with ppGpp controls the 'stringent response', an adaptive process that allows bacteria to respond to amino acid starvation, resulting in the coordinated regulation of numerous cellular activities. The polypeptide is Guanosine-5'-triphosphate,3'-diphosphate pyrophosphatase (Aeromonas salmonicida (strain A449)).